The chain runs to 273 residues: Light-independent protochlorophyllide reductase iron-sulfur ATP-binding protein (273 aa).

Residues 12–17 and Lys-41 each bind ATP; that span reads GIGKST. Ser-16 is a binding site for Mg(2+). [4Fe-4S] cluster-binding residues include Cys-97 and Cys-131. 182-183 lines the ATP pocket; it reads NR.

It belongs to the NifH/BchL/ChlL family. As to quaternary structure, homodimer. Protochlorophyllide reductase is composed of three subunits; BchL, BchN and BchB. It depends on [4Fe-4S] cluster as a cofactor.

The enzyme catalyses chlorophyllide a + oxidized 2[4Fe-4S]-[ferredoxin] + 2 ADP + 2 phosphate = protochlorophyllide a + reduced 2[4Fe-4S]-[ferredoxin] + 2 ATP + 2 H2O. It functions in the pathway porphyrin-containing compound metabolism; bacteriochlorophyll biosynthesis (light-independent). In terms of biological role, component of the dark-operative protochlorophyllide reductase (DPOR) that uses Mg-ATP and reduced ferredoxin to reduce ring D of protochlorophyllide (Pchlide) to form chlorophyllide a (Chlide). This reaction is light-independent. The L component serves as a unique electron donor to the NB-component of the complex, and binds Mg-ATP. In Roseiflexus sp. (strain RS-1), this protein is Light-independent protochlorophyllide reductase iron-sulfur ATP-binding protein.